The sequence spans 107 residues: CLAVATA3/ESR (CLE)-related protein 13 (107 aa).

Residues 1-25 (MATTRVSHVLGFLLWISLLIFVSIG) form the signal peptide. The N-linked (GlcNAc...) asparagine glycan is linked to Asn29. The segment at 79-107 (ALPAGGSEIDPRYGVEKRLVPSGPNPLHH) is disordered. A compositionally biased stretch (basic and acidic residues) spans 87–97 (IDPRYGVEKRL). Pro99 and Pro102 each carry hydroxyproline. O-linked (Ara...) hydroxyproline glycosylation is present at Pro102.

This sequence belongs to the CLV3/ESR signal peptide family. Post-translationally, the O-glycosylation (arabinosylation) of the hydroxyproline Pro-102 enhances binding affinity of the CLE13p peptide for its receptor. Mostly expressed in seedlings, roots, flowers, stems and apex, and, to a lower extent, in leaves and siliques.

The protein localises to the secreted. It localises to the extracellular space. Extracellular signal peptide that regulates cell fate. Represses root apical meristem maintenance. Regulates the transition of protophloem cells from proliferation to differentiation, thus impinging on postembryonic growth capacity of the root meristem; this signaling pathway requires CRN and CLV2. In Arabidopsis thaliana (Mouse-ear cress), this protein is CLAVATA3/ESR (CLE)-related protein 13.